Here is a 336-residue protein sequence, read N- to C-terminus: Potassium channel subfamily K member 1 (336 aa).

Residues 1 to 20 (MLQSLAGSSCVRLVERHRSA) are Cytoplasmic-facing. Residues 21-41 (WCFGFLVLGYLLYLVFGAVVF) traverse the membrane as a helical segment. The Extracellular segment spans residues 42–103 (SSVELPYEDL…SNASGNWNWD (62 aa)). The N-linked (GlcNAc...) asparagine glycan is linked to asparagine 95. Residues 104–116 (FTSALFFASTVLS) constitute an intramembrane region (helical). The stretch at 117 to 122 (TTGYGH) is an intramembrane region. A selectivity filter 1 region spans residues 117–122 (TTGYGH). Residues 123 to 132 (TVPLSDGGKA) lie on the Extracellular side of the membrane. The chain crosses the membrane as a helical span at residues 133–156 (FCIIYSVIGIPFTLLFLTAVVQRV). At 157–181 (TIHVTRRPVLYFHVRWGFSKQAVAI) the chain is on the cytoplasmic side. A helical membrane pass occupies residues 182 to 202 (VHAVLLGVVTVSCFFFIPAAV). The Extracellular segment spans residues 203 to 211 (FSVLEDDWN). The helical intramembrane region spans 212–224 (FLESFYFCFISLS). Residues 225–230 (TIGLGD) form a selectivity filter 2 region. An intramembrane segment occupies 225–231 (TIGLGDY). Residues 232-243 (VPGEGYNQKFRE) are Extracellular-facing. The chain crosses the membrane as a helical span at residues 244–267 (LYKIGITCYLLLGLIAMLVVLETF). The Cytoplasmic portion of the chain corresponds to 268–336 (CELHELKKFR…PALADGASDH (69 aa)). A Glycyl lysine isopeptide (Lys-Gly) (interchain with G-Cter in SUMO) cross-link involves residue lysine 274. The interval 293–299 (IIEHDQL) is important for intracellular retention in recycling endosomes. The disordered stretch occupies residues 307 to 336 (QAAGVQEDQKQNEPFVSPQPPALADGASDH).

This sequence belongs to the two pore domain potassium channel (TC 1.A.1.8) family. In terms of assembly, homodimer; disulfide-linked. Heterodimer with KCNK2; disulfide-linked. In astrocytes, forms mostly heterodimeric potassium channels with KCNK2, with only a minor proportion of functional channels containing homodimeric KCNK1. Interacts with KCNK3 and KCNK9, forming functional heterodimeric channels. Interacts with GNG4. Identified in a complex with PSD and ARF6; interacts only with PSD that is bound to ARF6. Interacts with UBE2I. Sumoylation is controversial. Sumoylated by UBE2I. Not sumoylated when expressed in xenopus oocytes or mammalian cells. Sumoylation inactivates the channel, but does not interfere with expression at the cell membrane. Sumoylation of a single subunit is sufficient to silence the dimeric channel. Sumoylation of KCNK1 is sufficient to silence heterodimeric channels formed by KCNK1 and KCNK3 or KCNK9. Desumoylated by SENP1; this activates the channel. Desumoylated by SENP1; this strongly increases halothane-mediated activation of heterodimeric channels formed with KCNK9. SENP1 treatment has no effect.

The protein localises to the cell membrane. It localises to the recycling endosome. Its subcellular location is the synaptic cell membrane. The protein resides in the cytoplasmic vesicle. It is found in the perikaryon. The protein localises to the cell projection. It localises to the dendrite. Its subcellular location is the apical cell membrane. The enzyme catalyses K(+)(in) = K(+)(out). The catalysed reaction is NH4(+)(in) = NH4(+)(out). It carries out the reaction Na(+)(in) = Na(+)(out). It catalyses the reaction Rb(+)(in) = Rb(+)(out). The enzyme catalyses Cs(+)(in) = Cs(+)(out). The catalysed reaction is Li(+)(in) = Li(+)(out). It carries out the reaction L-glutamate(out) = L-glutamate(in). It catalyses the reaction chloride(in) = chloride(out). In terms of biological role, ion channel that contributes to passive transmembrane potassium transport and to the regulation of the resting membrane potential in brain astrocytes, but also in kidney and in other tissues. Forms dimeric channels through which potassium ions pass in accordance with their electrochemical gradient. The channel is selective for K(+) ions at physiological potassium concentrations and at neutral pH, but becomes permeable to Na(+) at subphysiological K(+) levels and upon acidification of the extracellular medium. The homodimer has very low potassium channel activity, when expressed in heterologous systems, and can function as weakly inward rectifying potassium channel. Channel activity is modulated by activation of serotonin receptors. Heterodimeric channels containing KCNK1 and KCNK2 have much higher activity, and may represent the predominant form in astrocytes. Heterodimeric channels containing KCNK1 and KCNK3 or KCNK9 have much higher activity. Heterodimeric channels formed by KCNK1 and KCNK9 may contribute to halothane-sensitive currents. Mediates outward rectifying potassium currents in dentate gyrus granule cells and contributes to the regulation of their resting membrane potential. Contributes to the regulation of action potential firing in dentate gyrus granule cells and down-regulates their intrinsic excitability. In astrocytes, the heterodimer formed by KCNK1 and KCNK2 is required for rapid glutamate release in response to activation of G-protein coupled receptors, such as F2R and CNR1. Required for normal ion and water transport in the kidney. Contributes to the regulation of the resting membrane potential of pancreatic beta cells. The low channel activity of homodimeric KCNK1 may be due to sumoylation. The low channel activity may be due to rapid internalization from the cell membrane and retention in recycling endosomes. Permeable to monovalent cations with ion selectivity for K(+) &gt; Rb(+) &gt;&gt; NH4(+) &gt;&gt; Cs(+) = Na(+) = Li(+). The chain is Potassium channel subfamily K member 1 from Bos taurus (Bovine).